Here is a 1040-residue protein sequence, read N- to C-terminus: Multidrug resistance protein MdtB (1040 aa).

A run of 12 helical transmembrane segments spans residues 16–36, 347–367, 369–389, 396–416, 440–460, 472–492, 537–557, 863–883, 888–908, 911–931, 968–988, and 998–1018; these read FIMR…AGII, LMMA…NIPA, IIPG…MVFL, LTLM…IVVI, IGFT…PLLF, FAIT…TLTP, WLTL…WVFI, LGST…VLGI, FIHP…ALLA, IAGS…IGIV, ILMT…STGV, and IGMV…TPVI.

The protein belongs to the resistance-nodulation-cell division (RND) (TC 2.A.6) family. MdtB subfamily. As to quaternary structure, part of a tripartite efflux system composed of MdtA, MdtB and MdtC. MdtB forms a heteromultimer with MdtC.

The protein localises to the cell inner membrane. The MdtABC tripartite complex confers resistance against novobiocin and deoxycholate. This is Multidrug resistance protein MdtB from Escherichia coli O17:K52:H18 (strain UMN026 / ExPEC).